The primary structure comprises 173 residues: Ribosome maturation factor RimM (173 aa).

The PRC barrel domain occupies 90-169 (EDEYFWFDIL…RIDTKGAQDI (80 aa)).

The protein belongs to the RimM family. Binds ribosomal protein uS19.

The protein localises to the cytoplasm. An accessory protein needed during the final step in the assembly of 30S ribosomal subunit, possibly for assembly of the head region. Essential for efficient processing of 16S rRNA. May be needed both before and after RbfA during the maturation of 16S rRNA. It has affinity for free ribosomal 30S subunits but not for 70S ribosomes. This Nitratiruptor sp. (strain SB155-2) protein is Ribosome maturation factor RimM.